The primary structure comprises 671 residues: Preterminal protein (671 aa).

The short motif at 380–389 (RLPVRRRRRR) is the Nuclear localization signal element. The interval 386–411 (RRRRVPPPPPPPEEEEGEALMEEEIE) is disordered. Residues 397–411 (PEEEEGEALMEEEIE) show a composition bias toward acidic residues. Position 580 is an O-(5'-phospho-DNA)-serine (S580). A disordered region spans residues 645–671 (GADVPLPPLPAGPEPPLPPGARPRHRF). Over residues 649–665 (PLPPLPAGPEPPLPPGA) the composition is skewed to pro residues.

This sequence belongs to the adenoviridae terminal protein family. In terms of assembly, heterodimer with the polymerase; this heterodimer binds to bp 9 to 18 of the genome. Interacts with host POU2F1; POU2F1 binds to the auxiliary sequences in the inverted terminal repeats and tethers the pTP-POL heterodimer to the origin DNA thereby participating in the assembly of the pre-initiation complex (POL-TP-DBP-NFIA-POU2F1). Preterminal protein is used to replicate viral genome, upon genomic encapsidation it is processed first into iTP and finally into TP by adenovirus protease.

It is found in the host nucleus matrix. Protein covalently bound to the viral DNA that acts as a primer for viral genomic replication by DNA strand displacement. Assembles on the viral origin of replication in an initiation complex with viral polymerase, DBP, host NFIA and host POU2F1/OCT1. During initiation, the polymerase covalently couples the first dCTP with Ser-580 of pTP. The terminal protein stimulates the template activity over 20 fold compared to protein-free templates. Neo-synthesized viral genomes are linked to two preterminal proteins, one for each 5' end. These new genomes are encapsidated in the nucleus, and during capsid maturation by viral protease, preterminal protein is first cleaved into intermediary (iTP), then into mature TP. May play a role in host nuclear matrix localization of genomic DNA. This Human adenovirus C serotype 5 (HAdV-5) protein is Preterminal protein.